The chain runs to 90 residues: Cuticle protein 9.5 (90 aa).

In terms of biological role, component of the cuticle of migratory locust which contains more than 100 different structural proteins. This Locusta migratoria (Migratory locust) protein is Cuticle protein 9.5.